The following is a 448-amino-acid chain: MEITSSAMLKPAPTPTPHPLAGEKVPLTAFDRAAFDVFVPMVFAYRAPAPSSEAVKEGLRMAVAAYPLAAGRLAVDVAADGQGRRRRRRVLHVNDEGALVLDATVEADLDAVLAANVATDLYPAPPEHSFGAAVLQVQLTRFRCSGLVVGLIVHHHVFDGHSTSAFCTTWARAVRDGEAFSVPSPCLDRAITSVPRSPPAPVFDHRSIEFKVGNKSSDSSGAAAAAVEKITNIGVRFTAKFVAELKARVGGRCSTFECVLAHAWKKMTAARGLKPEEFTRVRVAVNCRRRANPPAPADLFGNMVLWAFPRLQVRRLLSASYRDVVGAIRAAVARVDGEYIQSFVDYVEVADARGEELAATAAEPGETLCPDLEVDSWLGFRFHEMDLGTGPPAAVLSPDLPIEGLMILVPVGGDGGGVDLFVALADDRAQVFEQICYSLEEHAIPSHL.

The tract at residues 1–20 (MEITSSAMLKPAPTPTPHPL) is disordered. Catalysis depends on proton acceptor residues His-155 and Asp-386.

This sequence belongs to the plant acyltransferase family.

In terms of biological role, hydroxycinnamoyl transferase that catalyzes the transfer of an acyl from benzoyl-CoA to tryptamine, to produce benzoyl tryptamine. Serotonin and tyramine serve as acyl acceptors in vitro. Specific for benzoyl-CoA as acyl donor. Has no activity with p-coumaroyl-CoA, caffeoyl-CoA, or feruloyl-CoA as acyl donors. The protein is Tryptamine benzoyltransferase 2 of Oryza sativa subsp. japonica (Rice).